Consider the following 354-residue polypeptide: Guanine nucleotide-binding protein G(i) subunit alpha-1 (354 aa).

Gly2 carries N-myristoyl glycine lipidation. Cys3 is lipidated: S-palmitoyl cysteine. Positions 32 to 354 (REVKLLLLGA…KNNLKDCGLF (323 aa)) constitute a G-alpha domain. Positions 35–48 (KLLLLGAGESGKST) are G1 motif. GTP contacts are provided by residues 43 to 48 (ESGKST), 150 to 151 (DS), and 175 to 178 (LRTR). Residue Ser47 coordinates Mg(2+). The segment at 173–181 (DVLRTRVKT) is G2 motif. Residue Thr181 participates in Mg(2+) binding. Residues 196–205 (FKMFDVGGQR) are G3 motif. Residues 200–204 (DVGGQ), 269–272 (NKKD), and Ala326 each bind GTP. Positions 265 to 272 (ILFLNKKD) are G4 motif. Residues 324–329 (TCATDT) are G5 motif.

It belongs to the G-alpha family. G(i/o/t/z) subfamily. In terms of assembly, heterotrimeric G proteins are composed of 3 units; alpha, beta and gamma. The alpha chain contains the guanine nucleotide binding site. Part of a spindle orientation complex at least composed of GNAI1, GPSM2 and NUMA1. Identified in complex with the beta subunit GNB1 and the gamma subunit GNG1. Identified in complex with the beta subunit GNB1 and the gamma subunit GNG2. Component of the TAS2R14-GNAI1 complex, consisting of TAS2R14, GNAI1, GNB1 and GNG2; within the complex interacts with TAS2R14; this complex plays a role in the perception of bitterness. GTP binding causes dissociation of the heterotrimer, liberating the individual subunits so that they can interact with downstream effector proteins. Interacts (GDP-bound form) with GPSM1; this inhibits guanine nucleotide exchange and GTP binding. Interacts (GDP-bound form) with GPSM2 (via GoLoco domains); this inhibits guanine nucleotide exchange. Interacts with RGS10; this strongly enhances GTP hydrolysis. Interacts with RGS1 and RGS16; this strongly enhances GTPase activity. Interacts with RGS4. Interacts with RGS12. Interacts (via active GTP- or inactive GDP-bound forms) with RGS14 (via RGS and GoLoco domains). Interacts with RGS3, RGS6, RGS7, RGS8, RGS17, RGS18 and RGS20 (in vitro). Interacts (GDP-bound form) with RIC8A (via C-terminus); promoting GNAI1 folding and association with the plasma membrane. Interacts (inactive GDP-bound form) with NUCB1 (via GBA motif); the interaction leads to activation of GNAI1. Interacts (inactive GDP-bound form) with CCDC88C/DAPLE (via GBA motif); the interaction leads to activation of GNAI1. Interacts (inactive GDP-bound form) with CCDC8A/GIV (via GBA motif). In terms of processing, myristoylation at Gly-2 is required for membrane anchoring before palmitoylation. Post-translationally, palmitoylation at Cys-3 varies with membrane lipid composition.

Its subcellular location is the nucleus. It localises to the cytoplasm. The protein resides in the cell membrane. The protein localises to the cytoskeleton. It is found in the microtubule organizing center. Its subcellular location is the centrosome. It localises to the cell cortex. The protein resides in the membrane. It catalyses the reaction GTP + H2O = GDP + phosphate + H(+). Functionally, guanine nucleotide-binding proteins (G proteins) function as transducers downstream of G protein-coupled receptors (GPCRs) in numerous signaling cascades. The alpha chain contains the guanine nucleotide binding site and alternates between an active, GTP-bound state and an inactive, GDP-bound state. Signaling by an activated GPCR promotes GDP release and GTP binding. The alpha subunit has a low GTPase activity that converts bound GTP to GDP, thereby terminating the signal. Both GDP release and GTP hydrolysis are modulated by numerous regulatory proteins. Signaling is mediated via effector proteins, such as adenylate cyclase. Inhibits adenylate cyclase activity of ADCY1, ADCY5 and ADCY6, leading to decreased intracellular cAMP levels. The inactive GDP-bound form prevents the association of RGS14 with centrosomes and is required for the translocation of RGS14 from the cytoplasm to the plasma membrane. Required for normal cytokinesis during mitosis. Required for cortical dynein-dynactin complex recruitment during metaphase. This Bos taurus (Bovine) protein is Guanine nucleotide-binding protein G(i) subunit alpha-1 (GNAI1).